A 273-amino-acid polypeptide reads, in one-letter code: Protein OPG070 (273 aa).

The next 2 helical transmembrane spans lie at 123 to 143 (NEFI…LFWF) and 238 to 260 (FLLF…EYLM).

It belongs to the orthopoxvirus OPG070 family. Phosphorylated by OPG054/F10L kinase in vitro.

Its subcellular location is the virion. The protein localises to the host endoplasmic reticulum membrane. It localises to the host cytoplasm. May play a role in the biogenesis of the viral factories by recruiting and wrapping DNA replication sites in endoplasmic reticulum derived membranes. Later in infection, phosphorylation by the late viral kinase OPG054/F10L might decrease DNA-binding ability and trigger ER membranes disassembly. Binds DNA in vitro. This chain is Protein OPG070 (OPG070), found in Vaccinia virus (strain Western Reserve) (VACV).